A 292-amino-acid chain; its full sequence is Large ribosomal subunit protein mL67 (292 aa).

Residues 59–83 (VELKSPSRLQLKSEPGNKGNPKGHG) form a disordered region.

It belongs to the mitochondrion-specific ribosomal protein mL67 family. Component of the mitochondrial large ribosomal subunit (mt-LSU). Mature N.crassa 74S mitochondrial ribosomes consist of a small (37S) and a large (54S) subunit. The 37S small subunit contains a 16S ribosomal RNA (16S mt-rRNA) and 32 different proteins. The 54S large subunit contains a 23S rRNA (23S mt-rRNA) and 42 different proteins.

The protein localises to the mitochondrion. Its function is as follows. Component of the mitochondrial ribosome (mitoribosome), a dedicated translation machinery responsible for the synthesis of mitochondrial genome-encoded proteins, including at least some of the essential transmembrane subunits of the mitochondrial respiratory chain. The mitoribosomes are attached to the mitochondrial inner membrane and translation products are cotranslationally integrated into the membrane. mL67/MHR1 also has extraribosomal functions, being involved in regulation of mitochondrial DNA recombination, maintenance and repair, and generation of homoplasmic cells. mL67/MHR1 also acts as a transcription factor involved in regulation of RNA polymerase II-dependent transcription. This is Large ribosomal subunit protein mL67 (mhr1) from Neurospora crassa (strain ATCC 24698 / 74-OR23-1A / CBS 708.71 / DSM 1257 / FGSC 987).